The sequence spans 296 residues: MAATAEVGVTATLGAAARAVATRQGLLNDPYAEPLLGAVGIDYLTRAIADHTFAADESPVGDDPAVTSLLDALAAHTRFVDEFLAEAGRAGIRQVVILASGLDTRPYRLWWPRGTTVYEIDRPRVLDFKAGVLRGLDARLATNRCAVGIDLRDDWPAALRRVGFDAAQPTAWVAEQLLVGYLKPAEQNRLLRRLTAASAAGSRLAADHLPTWDPLQLEAERAFVEGWRRRGLDIDLASLTHPGEYHYVPEYLATHGWEPAARSIADLLGALGLGPRRRAGSGGAQFIPEYVTATRV.

S-adenosyl-L-methionine contacts are provided by residues D121 and 150-151; that span reads DL.

The protein belongs to the UPF0677 family.

Its function is as follows. Exhibits S-adenosyl-L-methionine-dependent methyltransferase activity. This chain is Putative S-adenosyl-L-methionine-dependent methyltransferase MAV_4764, found in Mycobacterium avium (strain 104).